The following is a 331-amino-acid chain: UDP-xylose and UDP-N-acetylglucosamine transporter (331 aa).

Transmembrane regions (helical) follow at residues 5-25, 30-50, 59-79, 92-112, 122-142, 153-173, 201-221, 238-260, 267-289, and 301-321; these read FAVT…ELLV, GCGN…GFIF, PQIP…VSVI, LHMI…IIIL, LSIV…AKQV, GVYA…ALLM, CLPL…AVLF, VMWF…VFIL, LTVT…LYFQ, and AVVF…PAAF.

Belongs to the nucleotide-sugar transporter family. SLC35B subfamily.

The protein localises to the golgi apparatus membrane. Its function is as follows. Sugar transporter that specifically mediates the transport of UDP-xylose (UDP-Xyl) and UDP-N-acetylglucosamine (UDP-GlcNAc) from cytosol into Golgi. This chain is UDP-xylose and UDP-N-acetylglucosamine transporter (slc35b4), found in Danio rerio (Zebrafish).